The sequence spans 312 residues: Olfactory receptor 1J21 (312 aa).

The next 7 membrane-spanning stretches (helical) occupy residues Ala-29–Ile-49, Pro-58–Ala-78, Ala-95–Leu-115, Leu-143–Phe-163, Leu-197–Ser-217, Cys-241–Phe-261, and Val-272–Leu-292.

The protein belongs to the G-protein coupled receptor 1 family.

It localises to the cell membrane. Its function is as follows. Odorant receptor. Activated by (+) and (-)-carvone. This is Olfactory receptor 1J21 from Mus musculus (Mouse).